Consider the following 595-residue polypeptide: Pyranose dehydrogenase (595 aa).

An N-terminal signal peptide occupies residues 1–21; sequence MARFNARLFSIAILGFQVARS. 2 N-linked (GlcNAc...) asparagine glycosylation sites follow: N95 and N110. Position 123 is a tele-8alpha-FAD histidine (H123). 5 N-linked (GlcNAc...) asparagine glycosylation sites follow: N195, N337, N367, N502, and N510. H530 (proton acceptor) is an active-site residue. N541 is a glycosylation site (N-linked (GlcNAc...) asparagine). Residue H574 is part of the active site.

It belongs to the GMC oxidoreductase family. In terms of assembly, monomer. The cofactor is FAD. Post-translationally, N-glycosylated.

It localises to the secreted. It carries out the reaction pyranose + acceptor = pyranos-2-ulose + reduced acceptor.. The catalysed reaction is pyranose + acceptor = pyranos-3-ulose + reduced acceptor.. The enzyme catalyses pyranose + acceptor = pyranos-2,3-diulose + reduced acceptor.. It catalyses the reaction a pyranoside + acceptor = a pyranosid-3-ulose + reduced acceptor.. It carries out the reaction a pyranoside + acceptor = a pyranosid-3,4-diulose + reduced acceptor.. Its function is as follows. Catalyzes the single-oxidation or sequential double oxidation reaction of carbohydrates primarily at carbon-2 and/or carbon-3 with the concomitant reduction of the flavin. The enzyme exhibits a broad sugar substrate specificity, oxidizing different aldopyranoses to the corresponding C-1, C-2, C-3 or C-1,2, C-2,3 and C-3,4 (di)dehydro sugars with substrate-specific regioselectivity. Accepts only a narrow range of electron acceptors such as substituted benzoquinones and complexed metal ions and reacts extremely slowly with O(2) as acceptor. May play a role in the natural recycling of plant matter by oxidizing all major monosaccharides in lignocellulose and by reducing quinone compounds or reactive radical species generated during lignin depolymerization. The sequence is that of Pyranose dehydrogenase from Agaricus campestris (Field mushroom).